Reading from the N-terminus, the 166-residue chain is Small heat shock protein OV25-2 (166 aa).

Residues 38–149 (LNECNIGNSL…ASRNIPIRAS (112 aa)) form the sHSP domain. The interval 140–166 (ASRNIPIRASPKEPEANQKSAINDAKQ) is disordered.

It belongs to the small heat shock protein (HSP20) family.

In Onchocerca volvulus, this protein is Small heat shock protein OV25-2 (OV25-2).